Here is a 254-residue protein sequence, read N- to C-terminus: Type III pantothenate kinase (254 aa).

13 to 20 (MIGNTRQH) is an ATP binding site. Substrate is bound by residues Tyr84 and 88–91 (GLDR). Asp90 (proton acceptor) is an active-site residue. A K(+)-binding site is contributed by Asp110. Thr113 is an ATP binding site. Substrate is bound at residue Thr166.

This sequence belongs to the type III pantothenate kinase family. In terms of assembly, homodimer. The cofactor is NH4(+). K(+) serves as cofactor.

It is found in the cytoplasm. The enzyme catalyses (R)-pantothenate + ATP = (R)-4'-phosphopantothenate + ADP + H(+). It participates in cofactor biosynthesis; coenzyme A biosynthesis; CoA from (R)-pantothenate: step 1/5. In terms of biological role, catalyzes the phosphorylation of pantothenate (Pan), the first step in CoA biosynthesis. This Thermosynechococcus vestitus (strain NIES-2133 / IAM M-273 / BP-1) protein is Type III pantothenate kinase.